A 538-amino-acid polypeptide reads, in one-letter code: RNA-binding protein RO60 (538 aa).

A TROVE domain is found at 16–369 (VPNSEGCYVW…SFKLVEPTGK (354 aa)). An RNA-binding region spans residues 120-284 (RIPTHLFTFI…DMPLTALLRN (165 aa)). A VWFA-like domain region spans residues 361–538 (FKLVEPTGKR…VIRNFTLDLI (178 aa)). A divalent metal cation-binding residues include Ser-378, Ser-380, and Thr-445.

This sequence belongs to the Ro 60 kDa family.

It is found in the cytoplasm. In terms of biological role, RNA-binding protein that binds to misfolded non-coding RNAs, pre-5S rRNA, and several small cytoplasmic RNA molecules known as Y RNAs. May play roles in cilia formation and/or maintenance. The polypeptide is RNA-binding protein RO60 (Xenopus laevis (African clawed frog)).